A 204-amino-acid chain; its full sequence is Octanoyltransferase (204 aa).

A BPL/LPL catalytic domain is found at 27–204; the sequence is KNTKDELWIV…LINYVSRNRH (178 aa). Residues 66–73, 133–135, and 146–148 contribute to the substrate site; these read RGGQVTYH, ALG, and GLS. Cysteine 164 (acyl-thioester intermediate) is an active-site residue.

Belongs to the LipB family.

The protein resides in the cytoplasm. It carries out the reaction octanoyl-[ACP] + L-lysyl-[protein] = N(6)-octanoyl-L-lysyl-[protein] + holo-[ACP] + H(+). Its pathway is protein modification; protein lipoylation via endogenous pathway; protein N(6)-(lipoyl)lysine from octanoyl-[acyl-carrier-protein]: step 1/2. Functionally, catalyzes the transfer of endogenously produced octanoic acid from octanoyl-acyl-carrier-protein onto the lipoyl domains of lipoate-dependent enzymes. Lipoyl-ACP can also act as a substrate although octanoyl-ACP is likely to be the physiological substrate. This chain is Octanoyltransferase, found in Vesicomyosocius okutanii subsp. Calyptogena okutanii (strain HA).